Reading from the N-terminus, the 360-residue chain is Heme A synthase (360 aa).

The next 5 membrane-spanning stretches (helical) occupy residues Ala13–Gly33, Leu99–Gly119, Leu129–Ser149, Tyr160–Val180, and Ser199–Leu219. His263 serves as a coordination point for heme. The next 3 membrane-spanning stretches (helical) occupy residues Met265–Val282, Gly292–Leu312, and Val315–Val335. A heme-binding site is contributed by His323.

It belongs to the COX15/CtaA family. Type 2 subfamily. Interacts with CtaB. Heme b serves as cofactor.

It localises to the cell membrane. It catalyses the reaction Fe(II)-heme o + 2 A + H2O = Fe(II)-heme a + 2 AH2. Its pathway is porphyrin-containing compound metabolism; heme A biosynthesis; heme A from heme O: step 1/1. Its function is as follows. Catalyzes the conversion of heme O to heme A by two successive hydroxylations of the methyl group at C8. The first hydroxylation forms heme I, the second hydroxylation results in an unstable dihydroxymethyl group, which spontaneously dehydrates, resulting in the formyl group of heme A. This chain is Heme A synthase, found in Bradyrhizobium diazoefficiens (strain JCM 10833 / BCRC 13528 / IAM 13628 / NBRC 14792 / USDA 110).